The following is a 634-amino-acid chain: ABC transporter B family member 29, chloroplastic (634 aa).

Residues 1–51 constitute a chloroplast transit peptide; the sequence is MSFLLLTPPPCLLIPPPPLSHRRSSSLFLKHPFQPSPRPLSFCKPSALRLR. The next 6 membrane-spanning stretches (helical) occupy residues 75–95, 119–139, 195–215, 219–239, 307–327, and 330–350; these read TVLL…QIVP, LVLA…QAFL, LLNT…HMIV, ALTL…AYLG, IVQV…VILA, and SLSS…IDPV. In terms of domain architecture, ABC transmembrane type-1 spans 77–362; that stretch reads LLGWLCSCVS…LGKAYNELKQ (286 aa). The ABC transporter domain occupies 396–633; sequence VELCDISFKY…KDSLTSAGLV (238 aa). Residue 430 to 437 participates in ATP binding; it reads GPSGGGKT.

The protein belongs to the ABC transporter superfamily. ABCB family. Multidrug resistance exporter (TC 3.A.1.201) subfamily.

It is found in the plastid. The protein localises to the chloroplast membrane. The polypeptide is ABC transporter B family member 29, chloroplastic (ABCB29) (Arabidopsis thaliana (Mouse-ear cress)).